The primary structure comprises 216 residues: MSDTPHTAIDTVYPGNLFMVVAPSGAGKSTLVNALLAQDAAIRLSISHTTRAPRPGEQDGREYHFCTVDSFRAARDRGEFLEWAEVHGNYYATSRVWIEEQMAQGNDVLLEIDWQGAQQVHQRFSNAVEIFILPPSLTALEDRLKKRGQDEPNVIVRRLLAAGSEMSHASESDYVIINEVFDNALEELRNVVRATRLRFSSQKARHTELFIELGIH.

The 179-residue stretch at 15–193 (GNLFMVVAPS…ALEELRNVVR (179 aa)) folds into the Guanylate kinase-like domain. 22-29 (APSGAGKS) is a binding site for ATP.

Belongs to the guanylate kinase family.

It is found in the cytoplasm. The enzyme catalyses GMP + ATP = GDP + ADP. In terms of biological role, essential for recycling GMP and indirectly, cGMP. In Cupriavidus pinatubonensis (strain JMP 134 / LMG 1197) (Cupriavidus necator (strain JMP 134)), this protein is Guanylate kinase.